The chain runs to 289 residues: ATP synthase mitochondrial F1 complex assembly factor 2 (289 aa).

The transit peptide at 1 to 40 directs the protein to the mitochondrion; it reads MWRIYPRLRDRWRGLLDRRLSDPTVSVWPGPAPQPPARAY. K133 bears the N6-succinyllysine mark.

Belongs to the ATP12 family. Interacts with ATP5F1B; involved in the assembly of the F1 component of the mitochondrial ATP synthase (ATPase). Interacts with FMC1.

The protein resides in the mitochondrion inner membrane. Plays a role in the assembly of the F1 component of the mitochondrial ATP synthase (ATPase). This Mus musculus (Mouse) protein is ATP synthase mitochondrial F1 complex assembly factor 2.